Here is a 200-residue protein sequence, read N- to C-terminus: GTP cyclohydrolase-2 (200 aa).

GTP is bound at residue 50-54 (RVHSE). Zn(2+) is bound by residues C55, C66, and C68. GTP contacts are provided by residues Q71, 93 to 95 (EGR), and T115. The Proton acceptor role is filled by D127. R129 serves as the catalytic Nucleophile. GTP is bound by residues T150 and K155.

This sequence belongs to the GTP cyclohydrolase II family. The cofactor is Zn(2+).

It carries out the reaction GTP + 4 H2O = 2,5-diamino-6-hydroxy-4-(5-phosphoribosylamino)-pyrimidine + formate + 2 phosphate + 3 H(+). The protein operates within cofactor biosynthesis; riboflavin biosynthesis; 5-amino-6-(D-ribitylamino)uracil from GTP: step 1/4. Functionally, catalyzes the conversion of GTP to 2,5-diamino-6-ribosylamino-4(3H)-pyrimidinone 5'-phosphate (DARP), formate and pyrophosphate. The polypeptide is GTP cyclohydrolase-2 (Acinetobacter baumannii (strain SDF)).